A 118-amino-acid chain; its full sequence is Small ribosomal subunit protein uS13 (118 aa).

Residues 94-118 are disordered; sequence GLPLRGQRTRTNARTRKGPRKAIRK.

The protein belongs to the universal ribosomal protein uS13 family. Part of the 30S ribosomal subunit. Forms a loose heterodimer with protein S19. Forms two bridges to the 50S subunit in the 70S ribosome.

In terms of biological role, located at the top of the head of the 30S subunit, it contacts several helices of the 16S rRNA. In the 70S ribosome it contacts the 23S rRNA (bridge B1a) and protein L5 of the 50S subunit (bridge B1b), connecting the 2 subunits; these bridges are implicated in subunit movement. Contacts the tRNAs in the A and P-sites. This is Small ribosomal subunit protein uS13 from Stenotrophomonas maltophilia (strain R551-3).